The sequence spans 87 residues: U3-theraphotoxin-Hhn1a 10 (87 aa).

Positions Met-1–Ala-24 are cleaved as a signal peptide. The propeptide occupies Ser-25 to Arg-52. 3 cysteine pairs are disulfide-bonded: Cys-54-Cys-67, Cys-61-Cys-72, and Cys-66-Cys-79.

Belongs to the neurotoxin 10 (Hwtx-1) family. 51 (Hntx-8) subfamily. Hntx-8 sub-subfamily. In terms of tissue distribution, expressed by the venom gland.

It localises to the secreted. Its function is as follows. Ion channel inhibitor. The chain is U3-theraphotoxin-Hhn1a 10 from Cyriopagopus hainanus (Chinese bird spider).